The sequence spans 581 residues: Prolactin receptor (581 aa).

An N-terminal signal peptide occupies residues 1-24; that stretch reads MKENVASRAVFILLLFLNASLLNG. At 25-234 the chain is on the extracellular side; sequence QSPPGKPKII…QIPNDFPVND (210 aa). Fibronectin type-III domains are found at residues 27–127 and 129–229; these read PPGK…IVEP and PPAN…IPND. Residues cysteine 36 and cysteine 46 are joined by a disulfide bond. Asparagine 59 carries N-linked (GlcNAc...) asparagine glycosylation. Cysteine 75 and cysteine 86 are disulfide-bonded. N-linked (GlcNAc...) asparagine glycosylation occurs at asparagine 132. Zn(2+)-binding residues include aspartate 211 and histidine 212. A WSXWS motif motif is present at residues 215 to 219; sequence WSEWS. An N-linked (GlcNAc...) asparagine glycan is attached at asparagine 233. A helical transmembrane segment spans residues 235–258; that stretch reads TTVWIFVAVLSAVICLIMVWAVAL. At 259–581 the chain is on the cytoplasmic side; it reads KGYSMMTCIL…PAKEAPPALP (323 aa). Positions 267–275 match the Box 1 motif motif; it reads ILPPVPGPK. 2 disordered regions span residues 321 to 362 and 462 to 502; these read EDQQ…LFSE and LKPS…QDKT. Positions 329–349 are enriched in basic and acidic residues; it reads PSKEHMEQGVKPMHMDPDSDS.

This sequence belongs to the type I cytokine receptor family. Type 1 subfamily. Interacts with SMARCA1. Interacts with NEK3 and VAV2 and this interaction is prolactin-dependent.

The protein localises to the membrane. In terms of biological role, this is a receptor for the anterior pituitary hormone prolactin. This is Prolactin receptor (PRLR) from Cervus elaphus (Red deer).